The chain runs to 147 residues: Large ribosomal subunit protein uL13 (147 aa).

Belongs to the universal ribosomal protein uL13 family. As to quaternary structure, part of the 50S ribosomal subunit.

This protein is one of the early assembly proteins of the 50S ribosomal subunit, although it is not seen to bind rRNA by itself. It is important during the early stages of 50S assembly. This Streptomyces griseus subsp. griseus (strain JCM 4626 / CBS 651.72 / NBRC 13350 / KCC S-0626 / ISP 5235) protein is Large ribosomal subunit protein uL13.